The sequence spans 271 residues: Regulatory protein RecX (271 aa).

The protein belongs to the RecX family.

The protein localises to the cytoplasm. In terms of biological role, modulates RecA activity. In Geobacillus sp. (strain WCH70), this protein is Regulatory protein RecX.